The following is a 205-amino-acid chain: Imidazole glycerol phosphate synthase subunit HisH (205 aa).

The Glutamine amidotransferase type-1 domain maps to 3–205; the sequence is RIALLDYGMG…LLKNFVEWNI (203 aa). Cys80 functions as the Nucleophile in the catalytic mechanism. Active-site residues include His185 and Glu187.

Heterodimer of HisH and HisF.

It is found in the cytoplasm. It catalyses the reaction 5-[(5-phospho-1-deoxy-D-ribulos-1-ylimino)methylamino]-1-(5-phospho-beta-D-ribosyl)imidazole-4-carboxamide + L-glutamine = D-erythro-1-(imidazol-4-yl)glycerol 3-phosphate + 5-amino-1-(5-phospho-beta-D-ribosyl)imidazole-4-carboxamide + L-glutamate + H(+). The enzyme catalyses L-glutamine + H2O = L-glutamate + NH4(+). The protein operates within amino-acid biosynthesis; L-histidine biosynthesis; L-histidine from 5-phospho-alpha-D-ribose 1-diphosphate: step 5/9. IGPS catalyzes the conversion of PRFAR and glutamine to IGP, AICAR and glutamate. The HisH subunit catalyzes the hydrolysis of glutamine to glutamate and ammonia as part of the synthesis of IGP and AICAR. The resulting ammonia molecule is channeled to the active site of HisF. This Acinetobacter baylyi (strain ATCC 33305 / BD413 / ADP1) protein is Imidazole glycerol phosphate synthase subunit HisH.